Reading from the N-terminus, the 1578-residue chain is Chitinase ChiA (1578 aa).

An N-terminal signal peptide occupies residues 1–19 (MKHYYRLLFLLLFPLLASA). The region spanning 25–466 (KKVVGYYAQW…NQVDTSFGSV (442 aa)) is the GH18 1 domain. A GH18N region spans residues 26-446 (KVVGYYAQWS…GGMIWELSQD (421 aa)). Chitin-binding positions include 92-93 (DA) and 119-122 (GGWT). Catalysis depends on Glu-162, which acts as the Proton donor. Chitin contacts are provided by residues Tyr-163, 249-252 (FGYD), and Trp-441. Residues 485–536 (TDVTVELRNASNAVIQTVVSANGNFAFNNLTSGQNYSLTALKATYTFTPVTL) form the CNA-B domain. The tract at residues 1142 to 1462 (KIILGYAHSW…GLMTWSVNWD (321 aa)) is GH18C. In terms of domain architecture, GH18 2 spans 1142-1483 (KIILGYAHSW…KAYAAYFASQ (342 aa)). The Proton donor role is filled by Glu-1264. A CTD region spans residues 1473 to 1578 (SKAYAAYFAS…KSFKVMNFLN (106 aa)).

This sequence belongs to the glycosyl hydrolase 18 family. Chitinase class II subfamily.

It localises to the secreted. It carries out the reaction Random endo-hydrolysis of N-acetyl-beta-D-glucosaminide (1-&gt;4)-beta-linkages in chitin and chitodextrins.. Functionally, major extracellular chitinase, which is essential for chitin utilization. This Flavobacterium johnsoniae (strain ATCC 17061 / DSM 2064 / JCM 8514 / BCRC 14874 / CCUG 350202 / NBRC 14942 / NCIMB 11054 / UW101) (Cytophaga johnsonae) protein is Chitinase ChiA (chiA).